Reading from the N-terminus, the 233-residue chain is Type IV secretion system protein PtlE homolog (233 aa).

Residues 42-62 (VAWAALAVTALSLIAIATMLP) traverse the membrane as a helical segment.

This sequence belongs to the virB8 family.

The protein resides in the cell inner membrane. In Bordetella parapertussis (strain 12822 / ATCC BAA-587 / NCTC 13253), this protein is Type IV secretion system protein PtlE homolog (ptlE).